The following is a 147-amino-acid chain: 3-dehydroquinate dehydratase (147 aa).

Tyr-23 functions as the Proton acceptor in the catalytic mechanism. Substrate-binding residues include Asn-74, His-80, and Asp-87. His-100 functions as the Proton donor in the catalytic mechanism. Residues 101–102 (IS) and Arg-111 contribute to the substrate site.

The protein belongs to the type-II 3-dehydroquinase family. As to quaternary structure, homododecamer.

The catalysed reaction is 3-dehydroquinate = 3-dehydroshikimate + H2O. Its pathway is metabolic intermediate biosynthesis; chorismate biosynthesis; chorismate from D-erythrose 4-phosphate and phosphoenolpyruvate: step 3/7. Catalyzes a trans-dehydration via an enolate intermediate. The sequence is that of 3-dehydroquinate dehydratase from Prochlorococcus marinus (strain MIT 9215).